A 332-amino-acid polypeptide reads, in one-letter code: Malate dehydrogenase, cytoplasmic (332 aa).

NAD(+)-binding positions include 11–17 (GAAGQIA) and Asp42. 2 residues coordinate substrate: Arg92 and Arg98. Residues Asn105, Gln112, and 129–131 (VGN) each bind NAD(+). Substrate contacts are provided by Asn131 and Arg162. The active-site Proton acceptor is the His187.

It belongs to the LDH/MDH superfamily. MDH type 2 family. As to quaternary structure, homodimer.

It is found in the cytoplasm. The catalysed reaction is (S)-malate + NAD(+) = oxaloacetate + NADH + H(+). Its activity is regulated as follows. By arsenate for both the forward and reverse reactions. Its function is as follows. Malate dehydrogenase. Has no activity with NADPH as substrate. Does not show lactate dehydrogenase activity. In Taenia solium (Pork tapeworm), this protein is Malate dehydrogenase, cytoplasmic.